We begin with the raw amino-acid sequence, 338 residues long: Tetraacyldisaccharide 4'-kinase (338 aa).

ATP is bound at residue 51 to 58; that stretch reads HVGGAGKT.

The protein belongs to the LpxK family.

It carries out the reaction a lipid A disaccharide + ATP = a lipid IVA + ADP + H(+). The protein operates within glycolipid biosynthesis; lipid IV(A) biosynthesis; lipid IV(A) from (3R)-3-hydroxytetradecanoyl-[acyl-carrier-protein] and UDP-N-acetyl-alpha-D-glucosamine: step 6/6. Its function is as follows. Transfers the gamma-phosphate of ATP to the 4'-position of a tetraacyldisaccharide 1-phosphate intermediate (termed DS-1-P) to form tetraacyldisaccharide 1,4'-bis-phosphate (lipid IVA). This Bradyrhizobium diazoefficiens (strain JCM 10833 / BCRC 13528 / IAM 13628 / NBRC 14792 / USDA 110) protein is Tetraacyldisaccharide 4'-kinase.